The primary structure comprises 311 residues: Ribonuclease HIII (311 aa).

The RNase H type-2 domain occupies 93 to 310 (LSAIGSDEVG…TKKALDIAKH (218 aa)). A divalent metal cation contacts are provided by Asp99, Glu100, and Asp204.

It belongs to the RNase HII family. RnhC subfamily. It depends on Mn(2+) as a cofactor. Mg(2+) is required as a cofactor.

It localises to the cytoplasm. The catalysed reaction is Endonucleolytic cleavage to 5'-phosphomonoester.. Endonuclease that specifically degrades the RNA of RNA-DNA hybrids. This Geobacillus kaustophilus (strain HTA426) protein is Ribonuclease HIII.